The primary structure comprises 372 residues: Mitogen-activated protein kinase kinase kinase 17 (372 aa).

Residues 3–259 (WTRGRILGRG…ATQLLNHPFL (257 aa)) enclose the Protein kinase domain. Residues 9-17 (LGRGSTATV) and Lys32 contribute to the ATP site. Catalysis depends on Asp126, which acts as the Proton acceptor. A Phosphoserine modification is found at Ser312.

Belongs to the protein kinase superfamily. Ser/Thr protein kinase family. In terms of assembly, binds to MKK3.

Its subcellular location is the nucleus. The enzyme catalyses L-seryl-[protein] + ATP = O-phospho-L-seryl-[protein] + ADP + H(+). The catalysed reaction is L-threonyl-[protein] + ATP = O-phospho-L-threonyl-[protein] + ADP + H(+). Its function is as follows. Component of the abscisic acid (ABA) signaling pathway that may act as ABA signal transducer in the context of abiotic stresses. Triggers MPK7 activation in a MKK3-dependent manner. Mediates the ABA-dependent activation of the MKK3-MPK7 module. The chain is Mitogen-activated protein kinase kinase kinase 17 from Arabidopsis thaliana (Mouse-ear cress).